Here is a 98-residue protein sequence, read N- to C-terminus: Large ribosomal subunit protein eL21 (98 aa).

Basic residues predominate over residues 1-17 (MQRSRGFRSKSRRKMTK). Positions 1–28 (MQRSRGFRSKSRRKMTKVVREGRSNPIT) are disordered.

It belongs to the eukaryotic ribosomal protein eL21 family.

This Methanobrevibacter smithii (strain ATCC 35061 / DSM 861 / OCM 144 / PS) protein is Large ribosomal subunit protein eL21.